We begin with the raw amino-acid sequence, 242 residues long: Putative serine/threonine-protein kinase (242 aa).

Residues 49–242 form the Protein kinase domain; that stretch reads FSSKNKVGEG…KSDVYSFGVL (194 aa). ATP is bound by residues 55 to 63 and K77; that span reads VGEGGCGAV. D177 functions as the Proton acceptor in the catalytic mechanism.

It belongs to the protein kinase superfamily. Ser/Thr protein kinase family.

The catalysed reaction is L-seryl-[protein] + ATP = O-phospho-L-seryl-[protein] + ADP + H(+). It carries out the reaction L-threonyl-[protein] + ATP = O-phospho-L-threonyl-[protein] + ADP + H(+). This Helianthus annuus (Common sunflower) protein is Putative serine/threonine-protein kinase.